We begin with the raw amino-acid sequence, 359 residues long: Phosphate acyltransferase (359 aa).

Belongs to the PlsX family. As to quaternary structure, homodimer. Probably interacts with PlsY.

The protein resides in the cytoplasm. It carries out the reaction a fatty acyl-[ACP] + phosphate = an acyl phosphate + holo-[ACP]. Its pathway is lipid metabolism; phospholipid metabolism. In terms of biological role, catalyzes the reversible formation of acyl-phosphate (acyl-PO(4)) from acyl-[acyl-carrier-protein] (acyl-ACP). This enzyme utilizes acyl-ACP as fatty acyl donor, but not acyl-CoA. This Salmonella agona (strain SL483) protein is Phosphate acyltransferase.